The primary structure comprises 1026 residues: Glutactin (1026 aa).

Residues 1-17 form the signal peptide; sequence MKPLLLVLALCGAQVHA. 2 positions are modified to sulfotyrosine: Tyr-26 and Tyr-29. A glycan (N-linked (GlcNAc...) asparagine) is linked at Asn-115. A disulfide bridge links Cys-123 with Cys-145. Residue Tyr-182 is modified to Sulfotyrosine. Cys-298 and Cys-316 are oxidised to a cystine. N-linked (GlcNAc...) asparagine glycosylation is found at Asn-368 and Asn-402. Sulfotyrosine is present on Tyr-559. Residues 601–641 form a disordered region; that stretch reads PITTTTTTTTTTTTTSRPYAYNPYANWQNRPSQQHPNWHPA. The span at 603–615 shows a compositional bias: low complexity; the sequence is TTTTTTTTTTTTT. A compositionally biased stretch (polar residues) spans 625 to 636; sequence ANWQNRPSQQHP. Tyr-645 is subject to Sulfotyrosine. Disordered regions lie at residues 659–695 and 723–1026; these read EREQ…REQE and EREQ…NSRN. Residues 723–752 show a composition bias toward basic and acidic residues; sequence EREQYEREQQEREQREREELERQQREREQQ. The residue at position 727 (Tyr-727) is a Sulfotyrosine. An N-linked (GlcNAc...) asparagine glycan is attached at Asn-810. A compositionally biased stretch (basic and acidic residues) spans 811 to 854; sequence FSEEDREQQQQEQLRREQQEQQEREYQLQLEREQQEREQQERGQ. Residues Tyr-836, Tyr-862, Tyr-865, Tyr-868, Tyr-922, and Tyr-928 each carry the sulfotyrosine modification. Residues 855–866 show a composition bias toward low complexity; the sequence is QEPGPEEYPSYE. Over residues 867–893 the composition is skewed to basic and acidic residues; it reads EYSRALQEKNAERDRIYAEEQERERQQ. Over residues 923-944 the composition is skewed to basic and acidic residues; that stretch reads DGDRSYAEEQEREQQRRDQVEQ. Residues 945–969 show a composition bias toward acidic residues; that stretch reads EREEQPDEDQGEEYERSPDEEEAAE. Tyr-981, Tyr-984, and Tyr-1006 each carry sulfotyrosine. The span at 1002-1026 shows a compositional bias: basic and acidic residues; it reads EEERYRAQQEEEDRIQAERERNSRN.

In the N-terminal section; belongs to the type-B carboxylesterase/lipase family. Extensively O-glycosylated and also N-glycosylated. In terms of processing, about four tyrosines are sulfated.

Its subcellular location is the secreted. The protein localises to the extracellular space. It is found in the extracellular matrix. It localises to the basement membrane. In terms of biological role, not known. Binds calcium ions. This chain is Glutactin (Glt), found in Drosophila melanogaster (Fruit fly).